A 325-amino-acid chain; its full sequence is MHLHSPPLMADGSFSLSGHLLRSPGGNPSRLHSIEAILGFAKEDSVLGSFQSEVSPRNAKEVDKRSSRHCLHKMTEEIHPQQEHLEDGQTGGYGDPYSAKTSSECLSPGLSTSNSDNKLSDDEQQPKKKHRRNRTTFTTYQLHELERAFEKSHYPDVYSREELAMKVNLPEVRVQVWFQNRRAKWRRQEKLEVTSMKLQDSPMLSFNRSPQPSAMSALSSSLPLDSWLTPPLSNSTALQSLPGFVTTPTSLPGSYTPPPFINPASMGHALQPLGAMGPPPPYQCGANFVDKYPLEEIDPRNNSIASLRMKAKEHIQSFGKPWQTI.

The Octapeptide motif motif lies at 32-39 (HSIEAILG). Positions 75-87 (TEEIHPQQEHLED) are enriched in basic and acidic residues. The segment at 75–136 (TEEIHPQQEH…KKKHRRNRTT (62 aa)) is disordered. Residues 99–117 (AKTSSECLSPGLSTSNSDN) are compositionally biased toward polar residues. The homeobox DNA-binding region spans 130 to 189 (HRRNRTTFTTYQLHELERAFEKSHYPDVYSREELAMKVNLPEVRVQVWFQNRRAKWRRQE). An OAR motif is present at residues 302–315 (NSIASLRMKAKEHI). Residues 308–312 (RMKAK) carry the Nuclear localization signal motif.

The protein belongs to the paired homeobox family. Bicoid subfamily. Highly expressed in anterior neural plate followed by neural retina, pigmented epithelium, in pineal gland, diencephalon floor and epiphysis. At later stages, the neuroretina remains the primary site of expression. No expression in the developing lens and cornea.

Its subcellular location is the nucleus. Plays a critical role in eye formation by regulating the initial specification of retinal cells and/or their subsequent proliferation. The protein is Retinal homeobox protein Rx-B (rax-b) of Xenopus laevis (African clawed frog).